The chain runs to 461 residues: Porin AaxA (461 aa).

The signal sequence occupies residues Met1 to Ala22.

Belongs to the OprB family.

It localises to the cell outer membrane. Facilitates L-arginine uptake, as part of the AaxABC system. The arginine uptake by the bacterium in the macrophage may be a virulence factor against the host innate immune response. In Chlamydia muridarum (strain MoPn / Nigg), this protein is Porin AaxA (aaxA).